The chain runs to 819 residues: Serine/threonine-protein phosphatase 1 regulatory subunit 10 (819 aa).

One can recognise a TFIIS N-terminal domain in the interval 73-147; the sequence is KLLNNWLTYA…NDWMAVIRSQ (75 aa). 3 disordered regions span residues 151 to 204, 296 to 391, and 495 to 785; these read QPAD…KFRS, KIKK…RKTV, and SVPD…GGDM. Composition is skewed to basic and acidic residues over residues 153 to 165 and 173 to 190; these read ADKE…EDAK and KTSE…EKPK. Residues 305–327 are compositionally biased toward polar residues; it reads SPTSNKASPFDSKSPTEASSLTK. A PP1-binding motif motif is present at residues 386 to 415; that stretch reads KKRKTVSWPEESRLREYFYFELDETERVNV. Residues 495-504 show a composition bias toward basic and acidic residues; sequence SVPDTPHEPD. Composition is skewed to polar residues over residues 533–543 and 560–578; these read MDQSTESQSPD and MGSS…QEIL. The segment covering 589-604 has biased composition (basic and acidic residues); the sequence is KPEDLMKQPDFSEKIK. Over residues 606 to 618 the composition is skewed to low complexity; it reads LLGSLQNQNQNQG. 2 stretches are compositionally biased toward pro residues: residues 635 to 663 and 670 to 695; these read FPPP…PGPN and HGPP…PPPN. 2 stretches are compositionally biased toward basic and acidic residues: residues 704-715 and 758-777; these read HGGERGGMRGGD and HGDH…GDHR. Residues 785–813 form a C3H1-type zinc finger; it reads MSTRPTCRHFMMKGNCRYENNCAFYHPGI.

As to quaternary structure, component of the PNUTS-PP1 complex (also named PTW/PP1 complex).

It is found in the nucleus. Its subcellular location is the chromosome. In terms of biological role, substrate-recognition component of the PNUTS-PP1 protein phosphatase complex, a protein phosphatase 1 (PP1) complex that promotes RNA polymerase II transcription pause-release, allowing transcription elongation. Promoter-proximal pausing by RNA polymerase II is a transcription halt following transcription initiation but prior to elongation, which acts as a checkpoint to control that transcripts are favorably configured for transcriptional elongation. The PNUTS-PP1 complex mediates the release of RNA polymerase II from promoter-proximal region of genes by catalyzing dephosphorylation of proteins involved in transcription. In some context, PPP1R10/PNUTS also acts as an inhibitor of protein phosphatase 1 (PP1) activity by preventing access to substrates. The polypeptide is Serine/threonine-protein phosphatase 1 regulatory subunit 10 (ppp1r10) (Xenopus laevis (African clawed frog)).